Reading from the N-terminus, the 380-residue chain is Flap endonuclease 1 (380 aa).

An N-domain region spans residues 1–104 (MGIQGLAKLI…GELAKRSERR (104 aa)). Arg19 carries the symmetric dimethylarginine; by PRMT5 modification. Asp34 is a Mg(2+) binding site. Residues Arg47 and Arg70 each coordinate DNA. At Lys80 the chain carries N6-acetyllysine. Asp86 is a binding site for Mg(2+). Arg100 and Arg104 each carry symmetric dimethylarginine; by PRMT5. The interval 122-253 (EVEKFTKRLV…KRAVDLIQKH (132 aa)) is I-domain. Positions 158, 160, 179, and 181 each coordinate Mg(2+). Glu158 is a DNA binding site. Ser187 carries the phosphoserine; by CDK2 modification. Arg192 is subject to Symmetric dimethylarginine; by PRMT5. Ser197 bears the Phosphoserine mark. Gly231 and Asp233 together coordinate DNA. A Mg(2+)-binding site is contributed by Asp233. Phosphoserine is present on residues Ser255, Ser293, and Ser335. Residues 327 to 380 (RLSKSRQGSTQGRLDDFFKVTGSLSSAKRKEPEPKGAAKKKAKTGAAGKFKRGK) form a disordered region. At Thr336 the chain carries Phosphothreonine. Residues 336 to 344 (TQGRLDDFF) are interaction with PCNA. 4 positions are modified to N6-acetyllysine: Lys354, Lys375, Lys377, and Lys380. Residues 363–380 (AAKKKAKTGAAGKFKRGK) are compositionally biased toward basic residues.

The protein belongs to the XPG/RAD2 endonuclease family. FEN1 subfamily. As to quaternary structure, interacts with PCNA. Three molecules of FEN1 bind to one PCNA trimer with each molecule binding to one PCNA monomer. PCNA stimulates the nuclease activity without altering cleavage specificity. The C-terminal domain binds EP300; can bind simultaneously to both PCNA and EP300. Interacts with DDX11; this interaction is direct and increases flap endonuclease activity of FEN1. Interacts with WDR4; regulating its endonuclease activity. Interacts with POLB. Mg(2+) serves as cofactor. Post-translationally, acetylated by EP300. Acetylation inhibits both endonuclease and exonuclease activity. Acetylation also reduces DNA-binding activity but does not affect interaction with PCNA or EP300. In terms of processing, phosphorylation upon DNA damage induces relocalization to the nuclear plasma. Phosphorylation at Ser-187 by CDK2 occurs during late S-phase and results in dissociation from PCNA. Methylation at Arg-192 by PRMT5 impedes Ser-187 phosphorylation and increases interaction with PCNA.

The protein resides in the nucleus. It is found in the nucleolus. Its subcellular location is the nucleoplasm. It localises to the mitochondrion. Its function is as follows. Structure-specific nuclease with 5'-flap endonuclease and 5'-3' exonuclease activities involved in DNA replication and repair. During DNA replication, cleaves the 5'-overhanging flap structure that is generated by displacement synthesis when DNA polymerase encounters the 5'-end of a downstream Okazaki fragment. It enters the flap from the 5'-end and then tracks to cleave the flap base, leaving a nick for ligation. Also involved in the long patch base excision repair (LP-BER) pathway, by cleaving within the apurinic/apyrimidinic (AP) site-terminated flap. Acts as a genome stabilization factor that prevents flaps from equilibrating into structures that lead to duplications and deletions. Also possesses 5'-3' exonuclease activity on nicked or gapped double-stranded DNA, and exhibits RNase H activity. Also involved in replication and repair of rDNA and in repairing mitochondrial DNA. The protein is Flap endonuclease 1 of Bos taurus (Bovine).